The sequence spans 396 residues: Putative ribosomal RNA large subunit methyltransferase YwbD (396 aa).

The PUA domain occupies 1–79 (MKLLTLKKAH…KHEQIDQAFF (79 aa)).

This sequence belongs to the methyltransferase superfamily. RlmI family.

The protein localises to the cytoplasm. The protein is Putative ribosomal RNA large subunit methyltransferase YwbD (ywbD) of Bacillus subtilis (strain 168).